A 109-amino-acid chain; its full sequence is NADH-quinone oxidoreductase subunit K (109 aa).

The next 3 membrane-spanning stretches (helical) occupy residues 12 to 32 (LNHYLILSSLVFTIGMLGLFM), 40 to 60 (ILMSIELMLLAVNINFVAFSV), and 72 to 92 (IIILTIAAAETSIGLAILLIY).

The protein belongs to the complex I subunit 4L family. NDH-1 is composed of 14 different subunits. Subunits NuoA, H, J, K, L, M, N constitute the membrane sector of the complex.

It is found in the cell inner membrane. The catalysed reaction is a quinone + NADH + 5 H(+)(in) = a quinol + NAD(+) + 4 H(+)(out). Functionally, NDH-1 shuttles electrons from NADH, via FMN and iron-sulfur (Fe-S) centers, to quinones in the respiratory chain. The immediate electron acceptor for the enzyme in this species is believed to be ubiquinone. Couples the redox reaction to proton translocation (for every two electrons transferred, four hydrogen ions are translocated across the cytoplasmic membrane), and thus conserves the redox energy in a proton gradient. The chain is NADH-quinone oxidoreductase subunit K from Rickettsia bellii (strain RML369-C).